The primary structure comprises 156 residues: MKLIVAAVGTRMPGWVETAWDDYAKRLPADCALELREIKPEPRTSGKTPAQMMAAEARRIETALPPGVLRIALDERGRDLTTVALSQQLEKWRAGGRDVAFLVGGPDGLDAALKASCEGLLRLSSLTLPHPMVRVLLAEQLYRAWAIMTNHPYHRA.

S-adenosyl-L-methionine contacts are provided by residues Leu73, Gly104, and 123-128; that span reads LSSLTL.

This sequence belongs to the RNA methyltransferase RlmH family. As to quaternary structure, homodimer.

It localises to the cytoplasm. It carries out the reaction pseudouridine(1915) in 23S rRNA + S-adenosyl-L-methionine = N(3)-methylpseudouridine(1915) in 23S rRNA + S-adenosyl-L-homocysteine + H(+). In terms of biological role, specifically methylates the pseudouridine at position 1915 (m3Psi1915) in 23S rRNA. The polypeptide is Ribosomal RNA large subunit methyltransferase H (Bordetella bronchiseptica (strain ATCC BAA-588 / NCTC 13252 / RB50) (Alcaligenes bronchisepticus)).